The sequence spans 218 residues: Uracil-DNA glycosylase (218 aa).

Asp59 serves as the catalytic Proton acceptor.

This sequence belongs to the uracil-DNA glycosylase (UDG) superfamily. UNG family.

It is found in the cytoplasm. The catalysed reaction is Hydrolyzes single-stranded DNA or mismatched double-stranded DNA and polynucleotides, releasing free uracil.. In terms of biological role, excises uracil residues from the DNA which can arise as a result of misincorporation of dUMP residues by DNA polymerase or due to deamination of cytosine. This chain is Uracil-DNA glycosylase, found in Staphylococcus aureus (strain bovine RF122 / ET3-1).